We begin with the raw amino-acid sequence, 264 residues long: Thymidylate synthase (264 aa).

DUMP is bound at residue Arg21. Residue His51 coordinates (6R)-5,10-methylene-5,6,7,8-tetrahydrofolate. 126–127 contributes to the dUMP binding site; that stretch reads RR. The active-site Nucleophile is Cys146. Residues 166 to 169, Asn177, and 207 to 209 contribute to the dUMP site; these read RSAD and HLY. A (6R)-5,10-methylene-5,6,7,8-tetrahydrofolate-binding site is contributed by Asp169. Ala263 is a (6R)-5,10-methylene-5,6,7,8-tetrahydrofolate binding site.

The protein belongs to the thymidylate synthase family. Bacterial-type ThyA subfamily. As to quaternary structure, homodimer.

Its subcellular location is the cytoplasm. The catalysed reaction is dUMP + (6R)-5,10-methylene-5,6,7,8-tetrahydrofolate = 7,8-dihydrofolate + dTMP. It functions in the pathway pyrimidine metabolism; dTTP biosynthesis. Functionally, catalyzes the reductive methylation of 2'-deoxyuridine-5'-monophosphate (dUMP) to 2'-deoxythymidine-5'-monophosphate (dTMP) while utilizing 5,10-methylenetetrahydrofolate (mTHF) as the methyl donor and reductant in the reaction, yielding dihydrofolate (DHF) as a by-product. This enzymatic reaction provides an intracellular de novo source of dTMP, an essential precursor for DNA biosynthesis. This Legionella pneumophila (strain Lens) protein is Thymidylate synthase.